Here is a 256-residue protein sequence, read N- to C-terminus: Trypsin CFT-1 (256 aa).

The first 17 residues, 1-17, serve as a signal peptide directing secretion; that stretch reads MRVTLALVALCLASVAA. Residues 18–24 constitute a propeptide, activation peptide; that stretch reads LPEKQQR. The Peptidase S1 domain occupies 25-256; sequence IVGGSVTTIE…RFTAWIQANA (232 aa). A disulfide bridge links cysteine 55 with cysteine 71. Catalysis depends on charge relay system residues histidine 70 and aspartate 115. Intrachain disulfides connect cysteine 180–cysteine 197 and cysteine 209–cysteine 233. Catalysis depends on serine 213, which acts as the Charge relay system.

The protein belongs to the peptidase S1 family.

Its subcellular location is the secreted. The protein localises to the extracellular space. The enzyme catalyses Preferential cleavage: Arg-|-Xaa, Lys-|-Xaa.. Functionally, responsible for the activation of delta-endotoxin from Bacillus thuringiensis. The sequence is that of Trypsin CFT-1 from Choristoneura fumiferana (Spruce budworm moth).